The primary structure comprises 103 residues: Histone H4 (103 aa).

The segment covering 1 to 14 has biased composition (gly residues); sequence MSGRGKGGKGLGKG. Residues 1–20 form a disordered region; the sequence is MSGRGKGGKGLGKGGAKRHR. A DNA-binding region spans residues 17 to 21; the sequence is KRHRK.

Belongs to the histone H4 family. In terms of assembly, the nucleosome is a histone octamer containing two molecules each of H2A, H2B, H3 and H4 assembled in one H3-H4 heterotetramer and two H2A-H2B heterodimers. The octamer wraps approximately 147 bp of DNA.

The protein localises to the nucleus. It localises to the chromosome. Its function is as follows. Core component of nucleosome. Nucleosomes wrap and compact DNA into chromatin, limiting DNA accessibility to the cellular machineries which require DNA as a template. Histones thereby play a central role in transcription regulation, DNA repair, DNA replication and chromosomal stability. DNA accessibility is regulated via a complex set of post-translational modifications of histones, also called histone code, and nucleosome remodeling. The chain is Histone H4 (H4-I) from Volvox carteri (Green alga).